We begin with the raw amino-acid sequence, 655 residues long: RalA-binding protein 1 (655 aa).

The disordered stretch occupies residues 1–158 (MTECFLPPTS…KKSKDLTAAD (158 aa)). Thr-2 is modified (N-acetylthreonine). Positions 24 to 33 (LTRTPSSEEI) are enriched in polar residues. A phosphoserine mark is found at Ser-29, Ser-30, and Ser-34. Position 44 is a phosphothreonine (Thr-44). Phosphoserine occurs at positions 48 and 62. The span at 52–68 (DILHEPPDVVSDDEKDH) shows a compositional bias: basic and acidic residues. Residue 69–74 (GKKKGK) participates in ATP binding. The span at 69–79 (GKKKGKFKKKE) shows a compositional bias: basic residues. Phosphoserine is present on residues Ser-92 and Ser-93. The segment covering 102 to 118 (KMKRSKGIHVFKKPSFS) has biased composition (basic residues). Residues 102–119 (KMKRSKGIHVFKKPSFSK) form a nuclear localization signal region. A compositionally biased stretch (basic and acidic residues) spans 119–155 (KKKEKDFKIKEKPKEEKHKEEKHKEEKHKEKKSKDLT). Positions 154–219 (LTAADVVKQW…PAVFRECIDY (66 aa)) are mediates association with membranes and could form transmembrane domains. A Rho-GAP domain is found at 192-380 (IPLADAVERT…VVLKQVMKPL (189 aa)). Residues 403-499 (RRQEFLLNCL…LTEQEELLAM (97 aa)) are mediates interaction with RALA and RALB. 418-425 (GGIKDLSK) serves as a coordination point for ATP. 2 positions are modified to phosphoserine: Ser-461 and Ser-463. The interval 500–655 (EQFLRRQIAS…PSRDRKETSI (156 aa)) is mediates interaction with REPS1 and REPS2. 2 disordered regions span residues 525–551 (QSRQQHGRSETEEYSSESESESEDEEE) and 601–655 (AEQQ…ETSI). Residues 536 to 551 (EEYSSESESESEDEEE) are compositionally biased toward acidic residues. Basic and acidic residues predominate over residues 624 to 655 (GVLEPKAAKEQPKAGKEPAKPSPSRDRKETSI). Residue Ser-645 is modified to Phosphoserine.

Interacts with the GTP-bound form of RALA (via effector domain); during mitosis, recruits RALBP1 to the mitochondrion where it promotes DNM1L phosphorylation and mitochondrial fission. Interacts with DNM1L; mediates its mitotic kinase cyclin B-CDK1-mediated phosphorylation during mitosis to promote mitochondrial fission. Interacts with the mitotic kinase cyclin B-CDK1 during mitosis. Interacts with the GTP-bound form of RALB (via effector domain). Interacts with REPS1; the interaction is direct and does not affect RALA-binding nor GTPase activator activity of RALBP1. Interacts with REPS2; the interaction is direct and does not affect RALA-binding nor GTPase activator activity of RALBP1. Interacts with EPN1, NUMB and TFAP2A during interphase and mitosis. Interacts with AP2M1; as part of the AP2 complex. Interacts with CDC42. Interacts with RAC1. In terms of processing, tyrosine-phosphorylated upon stimulation of cells with EGF. May undergo proteolytic cleavage to give peptides which reassemble to form a transporter complex. As to expression, expressed ubiquitously but at low levels. Shows a strong expression in the erythrocytes.

The protein resides in the cell membrane. The protein localises to the cytoplasm. It is found in the cytosol. Its subcellular location is the cytoskeleton. It localises to the spindle pole. The protein resides in the nucleus. The protein localises to the mitochondrion. The enzyme catalyses an S-substituted glutathione(in) + ATP + H2O = an S-substituted glutathione(out) + ADP + phosphate + H(+). It catalyses the reaction ATP + H2O + xenobioticSide 1 = ADP + phosphate + xenobioticSide 2.. It carries out the reaction leukotriene C4(in) + ATP + H2O = leukotriene C4(out) + ADP + phosphate + H(+). Multifunctional protein that functions as a downstream effector of RALA and RALB. As a GTPase-activating protein/GAP can inactivate CDC42 and RAC1 by stimulating their GTPase activity. As part of the Ral signaling pathway, may also regulate ligand-dependent EGF and insulin receptors-mediated endocytosis. During mitosis, may act as a scaffold protein in the phosphorylation of EPSIN/EPN1 by the mitotic kinase cyclin B-CDK1, preventing endocytosis during that phase of the cell cycle. During mitosis, also controls mitochondrial fission as an effector of RALA. Recruited to mitochondrion by RALA, acts as a scaffold to foster the mitotic kinase cyclin B-CDK1-mediated phosphorylation and activation of DNM1L. Its function is as follows. Could also function as a primary ATP-dependent active transporter for glutathione conjugates of electrophiles. May also actively catalyze the efflux of a wide range of substrates including xenobiotics like doxorubicin (DOX) contributing to cell multidrug resistance. The protein is RalA-binding protein 1 of Homo sapiens (Human).